Reading from the N-terminus, the 186-residue chain is UPF0301 protein CGSHiEE_01530 (186 aa).

It belongs to the UPF0301 (AlgH) family.

This Haemophilus influenzae (strain PittEE) protein is UPF0301 protein CGSHiEE_01530.